Here is a 281-residue protein sequence, read N- to C-terminus: Acetylglutamate kinase (281 aa).

Residues 64–65 (GG), R86, and N179 contribute to the substrate site.

This sequence belongs to the acetylglutamate kinase family. ArgB subfamily.

The protein resides in the cytoplasm. It catalyses the reaction N-acetyl-L-glutamate + ATP = N-acetyl-L-glutamyl 5-phosphate + ADP. Its pathway is amino-acid biosynthesis; L-arginine biosynthesis; N(2)-acetyl-L-ornithine from L-glutamate: step 2/4. Functionally, catalyzes the ATP-dependent phosphorylation of N-acetyl-L-glutamate. The chain is Acetylglutamate kinase from Campylobacter curvus (strain 525.92).